The chain runs to 361 residues: tRNA-specific 2-thiouridylase MnmA (361 aa).

ATP is bound by residues 8–15 and M35; that span reads AMSGGVDS. The interaction with target base in tRNA stretch occupies residues 95–97; the sequence is NPD. C100 serves as the catalytic Nucleophile. A disulfide bridge links C100 with C196. An ATP-binding site is contributed by G124. Positions 146-148 are interaction with tRNA; sequence KDQ. C196 serves as the catalytic Cysteine persulfide intermediate. The segment at 303–304 is interaction with tRNA; sequence RY.

Belongs to the MnmA/TRMU family.

It is found in the cytoplasm. It carries out the reaction S-sulfanyl-L-cysteinyl-[protein] + uridine(34) in tRNA + AH2 + ATP = 2-thiouridine(34) in tRNA + L-cysteinyl-[protein] + A + AMP + diphosphate + H(+). Its function is as follows. Catalyzes the 2-thiolation of uridine at the wobble position (U34) of tRNA, leading to the formation of s(2)U34. The protein is tRNA-specific 2-thiouridylase MnmA of Chlamydia felis (strain Fe/C-56) (Chlamydophila felis).